Reading from the N-terminus, the 88-residue chain is Cell division topological specificity factor (88 aa).

It belongs to the MinE family.

Functionally, prevents the cell division inhibition by proteins MinC and MinD at internal division sites while permitting inhibition at polar sites. This ensures cell division at the proper site by restricting the formation of a division septum at the midpoint of the long axis of the cell. The protein is Cell division topological specificity factor of Paracidovorax citrulli (strain AAC00-1) (Acidovorax citrulli).